A 47-amino-acid polypeptide reads, in one-letter code: Conotoxin Cal6.18 (47 aa).

The signal sequence occupies residues 1 to 19; it reads MKLTYVLIVAMLVLVVCRA.

It belongs to the conotoxin O1 superfamily. Post-translationally, may contain 3 disulfide bonds. As to expression, expressed by the venom duct.

The protein localises to the secreted. In terms of biological role, probable neurotoxin. The polypeptide is Conotoxin Cal6.18 (Californiconus californicus (California cone)).